The chain runs to 839 residues: DNA (cytosine-5)-methyltransferase CMT3 (839 aa).

2 disordered regions span residues 1–38 (MAPK…EPVT) and 51–86 (LDEP…KTKD). Over residues 19–30 (PKPKKRAPKRAK) the composition is skewed to basic residues. Positions 51-70 (LDEPIPESEAKSTWPDRYKP) are enriched in basic and acidic residues. One can recognise a BAH domain in the interval 108 to 227 (QIYELNDDAY…LPYDTFEAIQ (120 aa)). The SAM-dependent MTase C5-type domain occupies 269–813 (ATLLDLYSGC…YALGTAFQGL (545 aa)). Positions 382 to 447 (FTVDKIVGIS…LGYKSGILPL (66 aa)) constitute a Chromo domain. Cys-460 is an active-site residue.

This sequence belongs to the class I-like SAM-binding methyltransferase superfamily. C5-methyltransferase family. Homodimer. Interacts with HP1 and, through its chromodomain, with the N-terminal tail of histone H3 doubly methylated at 'Lys-9' and 'Lys-27'. Binds to JMJ24. In terms of processing, ubiquitinated by JMJ24, subsequently beingargeted to proteasomal degradation thus initiating the destabilization of the heterochromatic state of endogenous silenced loci.

The protein resides in the nucleus. The enzyme catalyses a 2'-deoxycytidine in DNA + S-adenosyl-L-methionine = a 5-methyl-2'-deoxycytidine in DNA + S-adenosyl-L-homocysteine + H(+). In terms of biological role, involved in the CpXpG methylation (e.g. CHG cytosine) and in gene silencing. Methylates preferentially transposon-related sequences. Functionally redundant to DRM1/DRM2 to maintain non-CpG methylation. Involved in RNA-directed DNA methylation. This is DNA (cytosine-5)-methyltransferase CMT3 from Arabidopsis thaliana (Mouse-ear cress).